Consider the following 394-residue polypeptide: 1-deoxy-D-xylulose 5-phosphate reductoisomerase (394 aa).

Residues threonine 14, glycine 15, serine 16, isoleucine 17, glycine 40, and asparagine 128 each coordinate NADPH. Lysine 129 provides a ligand contact to 1-deoxy-D-xylulose 5-phosphate. Glutamate 130 contributes to the NADPH binding site. Aspartate 154 is a Mn(2+) binding site. 1-deoxy-D-xylulose 5-phosphate contacts are provided by serine 155, glutamate 156, serine 180, and histidine 203. Mn(2+) is bound at residue glutamate 156. Glycine 209 is a binding site for NADPH. 1-deoxy-D-xylulose 5-phosphate is bound by residues serine 216, asparagine 221, lysine 222, and glutamate 225. Position 225 (glutamate 225) interacts with Mn(2+).

It belongs to the DXR family. Requires Mg(2+) as cofactor. It depends on Mn(2+) as a cofactor.

The catalysed reaction is 2-C-methyl-D-erythritol 4-phosphate + NADP(+) = 1-deoxy-D-xylulose 5-phosphate + NADPH + H(+). It functions in the pathway isoprenoid biosynthesis; isopentenyl diphosphate biosynthesis via DXP pathway; isopentenyl diphosphate from 1-deoxy-D-xylulose 5-phosphate: step 1/6. In terms of biological role, catalyzes the NADPH-dependent rearrangement and reduction of 1-deoxy-D-xylulose-5-phosphate (DXP) to 2-C-methyl-D-erythritol 4-phosphate (MEP). The protein is 1-deoxy-D-xylulose 5-phosphate reductoisomerase of Xylella fastidiosa (strain M23).